The chain runs to 305 residues: Sulfate adenylyltransferase subunit 2 (305 aa).

This sequence belongs to the PAPS reductase family. CysD subfamily. As to quaternary structure, heterodimer composed of CysD, the smaller subunit, and CysN.

It carries out the reaction sulfate + ATP + H(+) = adenosine 5'-phosphosulfate + diphosphate. It participates in sulfur metabolism; hydrogen sulfide biosynthesis; sulfite from sulfate: step 1/3. Functionally, with CysN forms the ATP sulfurylase (ATPS) that catalyzes the adenylation of sulfate producing adenosine 5'-phosphosulfate (APS) and diphosphate, the first enzymatic step in sulfur assimilation pathway. APS synthesis involves the formation of a high-energy phosphoric-sulfuric acid anhydride bond driven by GTP hydrolysis by CysN coupled to ATP hydrolysis by CysD. The protein is Sulfate adenylyltransferase subunit 2 of Ectopseudomonas mendocina (strain ymp) (Pseudomonas mendocina).